The primary structure comprises 475 residues: ADP-ribose glycohydrolase MACROD2 (475 aa).

A Macro domain is found at 59 to 240; the sequence is QEAPQMKKSL…IYKKKMNEFF (182 aa). Residues 77 to 79, 90 to 92, and 97 to 102 each bind substrate; these read GDI, AAN, and GGGGVD. A Glycyl lysine isopeptide (Lys-Gly) (interchain with G-Cter in ubiquitin) cross-link involves residue Lys-170. Substrate contacts are provided by residues 185-191 and Phe-224; that span reads ISTGIYG. Disordered regions lie at residues 241–306 and 324–475; these read PVDD…SQEA and GVNT…EDLQ. Composition is skewed to basic and acidic residues over residues 251 to 261 and 335 to 359; these read ADMKEDSEGPE and SEDK…DSDM. Positions 360-375 are enriched in polar residues; that stretch reads TNHSVCDQELPNGQEN. Basic and acidic residues predominate over residues 376–386; sequence DSAKSEGKTEA. 2 stretches are compositionally biased toward polar residues: residues 387–402 and 440–469; these read ESPS…SPNQ and SQGS…PTES.

Belongs to the MacroD-type family. MacroD1/2-like subfamily. Interacts with ADP-ribosylated PARP1. In terms of tissue distribution, expressed in the kidney.

The protein localises to the nucleus. It catalyses the reaction 2''-O-acetyl-ADP-D-ribose + H2O = ADP-D-ribose + acetate + H(+). The enzyme catalyses 4-O-(ADP-D-ribosyl)-L-aspartyl-[protein] + H2O = L-aspartyl-[protein] + ADP-D-ribose + H(+). It carries out the reaction 5-O-(ADP-D-ribosyl)-L-glutamyl-[protein] + H2O = L-glutamyl-[protein] + ADP-D-ribose + H(+). The catalysed reaction is alpha-NAD(+) + H2O = ADP-D-ribose + nicotinamide + H(+). Its activity is regulated as follows. Subject to product inhibition by ADP-ribose. Its function is as follows. Removes ADP-ribose from aspartate and glutamate residues in proteins bearing a single ADP-ribose moiety. Inactive towards proteins bearing poly-ADP-ribose. Deacetylates O-acetyl-ADP ribose, a signaling molecule generated by the deacetylation of acetylated lysine residues in histones and other proteins. The sequence is that of ADP-ribose glycohydrolase MACROD2 from Mus musculus (Mouse).